Here is a 366-residue protein sequence, read N- to C-terminus: MDPQINPAITATANSHDGPIETDAVIVGAGPVGLFQVFELGLLEIKAHIIDSLAYPGGQCIELYPDKPIYDIPAVPVCTGKELTDNLLKQIEPFGATFHLGQEVTLVNKRDDGRFDLETSKGTRFITKTIFIAGGVGSFQPRLLKVDGLDQFDGSQLHYRVRNPSAFAGKNLVIVGGGDSALDWTLNFVQDGPNKAESVILVHRRDGFKAAPASVAKMKELCDAYEMQFIVGQVTGFEATEGQLRSVKVTGGDGVTRVVPLDMLLVFFGLSPKLGPIAEWGLNIERKQVVVDTEKFETNVPGIFAVGDINVYPGKKKLILSGFHEAALAAFGAAPYIFPEKRIHLQYTTTSPKLHKVLGVETPVFD.

FAD-binding residues include aspartate 51, glutamine 59, tyrosine 64, valine 104, phenylalanine 139, aspartate 308, and threonine 349.

The protein belongs to the ferredoxin--NADP reductase type 2 family. Homodimer. It depends on FAD as a cofactor.

The enzyme catalyses 2 reduced [2Fe-2S]-[ferredoxin] + NADP(+) + H(+) = 2 oxidized [2Fe-2S]-[ferredoxin] + NADPH. In Methylibium petroleiphilum (strain ATCC BAA-1232 / LMG 22953 / PM1), this protein is Ferredoxin--NADP reductase.